The sequence spans 63 residues: 2-hydroxymuconate tautomerase (63 aa).

Pro2 serves as the catalytic Proton acceptor; via imino nitrogen.

It belongs to the 4-oxalocrotonate tautomerase family. In terms of assembly, homohexamer.

The enzyme catalyses (2Z,4E)-2-hydroxyhexa-2,4-dienedioate = (3E)-2-oxohex-3-enedioate. It functions in the pathway aromatic compound metabolism; salicylate degradation. In terms of biological role, catalyzes the ketonization of 2-hydroxymuconate stereoselectively to yield 2-oxo-3-hexenedioate. The protein is 2-hydroxymuconate tautomerase (nahJ) of Stutzerimonas stutzeri (Pseudomonas stutzeri).